A 56-amino-acid polypeptide reads, in one-letter code: Large ribosomal subunit protein eL37 (56 aa).

Cys-19, Cys-22, Cys-34, and Cys-37 together coordinate Zn(2+). A C4-type zinc finger spans residues 19–37 (CRRCGSVSLNVHTKQCTSC).

The protein belongs to the eukaryotic ribosomal protein eL37 family. Requires Zn(2+) as cofactor.

In terms of biological role, binds to the 23S rRNA. This is Large ribosomal subunit protein eL37 from Methanosarcina mazei (strain ATCC BAA-159 / DSM 3647 / Goe1 / Go1 / JCM 11833 / OCM 88) (Methanosarcina frisia).